Here is a 447-residue protein sequence, read N- to C-terminus: Imidazolonepropionase (447 aa).

Residues His85 and His87 each contribute to the Fe(3+) site. Residues His85 and His87 each contribute to the Zn(2+) site. Arg94, Tyr157, and His190 together coordinate 4-imidazolone-5-propanoate. Tyr157 lines the N-formimidoyl-L-glutamate pocket. His255 serves as a coordination point for Fe(3+). His255 serves as a coordination point for Zn(2+). Glu258 lines the 4-imidazolone-5-propanoate pocket. Fe(3+) is bound at residue Asp329. Asp329 serves as a coordination point for Zn(2+). Residues Asn331 and Gly333 each coordinate N-formimidoyl-L-glutamate. Ser334 lines the 4-imidazolone-5-propanoate pocket.

This sequence belongs to the metallo-dependent hydrolases superfamily. HutI family. Zn(2+) serves as cofactor. The cofactor is Fe(3+).

Its subcellular location is the cytoplasm. The catalysed reaction is 4-imidazolone-5-propanoate + H2O = N-formimidoyl-L-glutamate. The protein operates within amino-acid degradation; L-histidine degradation into L-glutamate; N-formimidoyl-L-glutamate from L-histidine: step 3/3. Functionally, catalyzes the hydrolytic cleavage of the carbon-nitrogen bond in imidazolone-5-propanoate to yield N-formimidoyl-L-glutamate. It is the third step in the universal histidine degradation pathway. This is Imidazolonepropionase from Shouchella clausii (strain KSM-K16) (Alkalihalobacillus clausii).